Here is a 480-residue protein sequence, read N- to C-terminus: Cytochrome b-c1 complex subunit 1, mitochondrial (480 aa).

The transit peptide at 1–34 directs the protein to the mitochondrion; it reads MAASAVCRAAGAGTRVLLRTRRSPALLRSSDLRG. An N6-acetyllysine mark is found at Lys111 and Lys138. N6-acetyllysine; alternate is present on Lys163. The residue at position 163 (Lys163) is an N6-succinyllysine; alternate. Ser212 carries the post-translational modification Phosphoserine. Lys248 carries the N6-acetyllysine modification.

This sequence belongs to the peptidase M16 family. UQCRC1/QCR1 subfamily. In terms of assembly, component of the ubiquinol-cytochrome c oxidoreductase (cytochrome b-c1 complex, complex III, CIII), a multisubunit enzyme composed of 11 subunits. The complex is composed of 3 respiratory subunits cytochrome b, cytochrome c1 and Rieske protein UQCRFS1, 2 core protein subunits UQCRC1/QCR1 and UQCRC2/QCR2, and 6 low-molecular weight protein subunits UQCRH/QCR6, UQCRB/QCR7, UQCRQ/QCR8, UQCR10/QCR9, UQCR11/QCR10 and subunit 9, the cleavage product of Rieske protein UQCRFS1. The complex exists as an obligatory dimer and forms supercomplexes (SCs) in the inner mitochondrial membrane with NADH-ubiquinone oxidoreductase (complex I, CI) and cytochrome c oxidase (complex IV, CIV), resulting in different assemblies (supercomplex SCI(1)III(2)IV(1) and megacomplex MCI(2)III(2)IV(2)). Interacts with UQCC6. Interacts with STMP1.

The protein localises to the mitochondrion inner membrane. In terms of biological role, component of the ubiquinol-cytochrome c oxidoreductase, a multisubunit transmembrane complex that is part of the mitochondrial electron transport chain which drives oxidative phosphorylation. The respiratory chain contains 3 multisubunit complexes succinate dehydrogenase (complex II, CII), ubiquinol-cytochrome c oxidoreductase (cytochrome b-c1 complex, complex III, CIII) and cytochrome c oxidase (complex IV, CIV), that cooperate to transfer electrons derived from NADH and succinate to molecular oxygen, creating an electrochemical gradient over the inner membrane that drives transmembrane transport and the ATP synthase. The cytochrome b-c1 complex catalyzes electron transfer from ubiquinol to cytochrome c, linking this redox reaction to translocation of protons across the mitochondrial inner membrane, with protons being carried across the membrane as hydrogens on the quinol. In the process called Q cycle, 2 protons are consumed from the matrix, 4 protons are released into the intermembrane space and 2 electrons are passed to cytochrome c. The 2 core subunits UQCRC1/QCR1 and UQCRC2/QCR2 are homologous to the 2 mitochondrial-processing peptidase (MPP) subunits beta-MPP and alpha-MPP respectively, and they seem to have preserved their MPP processing properties. May be involved in the in situ processing of UQCRFS1 into the mature Rieske protein and its mitochondrial targeting sequence (MTS)/subunit 9 when incorporated into complex III. Seems to play an important role in the maintenance of proper mitochondrial function in nigral dopaminergic neurons. The chain is Cytochrome b-c1 complex subunit 1, mitochondrial (UQCRC1) from Bos taurus (Bovine).